The chain runs to 313 residues: Protein FixB (313 aa).

Residue 255 to 283 participates in FAD binding; it reads LYLAVGISGQIQHMVGANASQTIFAINKD.

This sequence belongs to the ETF alpha-subunit/FixB family. As to quaternary structure, heterodimer of FixA and FixB.

It functions in the pathway amine and polyamine metabolism; carnitine metabolism. In terms of biological role, required for anaerobic carnitine reduction. May bring reductant to CaiA. The polypeptide is Protein FixB (Escherichia coli O127:H6 (strain E2348/69 / EPEC)).